The chain runs to 33 residues: Pardaxin P-2 (33 aa).

The protein belongs to the pardaxin family. In terms of assembly, in aqueous solution exists as a tetramer.

Its subcellular location is the secreted. It is found in the target cell membrane. Its function is as follows. Exhibits unusual shark repellent and surfactant properties. Forms voltage-dependent, ion-permeable channels in membranes. At high concentration causes cell membrane lysis. This Pardachirus pavoninus (Peacock sole) protein is Pardaxin P-2.